The primary structure comprises 140 residues: 3-hydroxyacyl-[acyl-carrier-protein] dehydratase FabZ (140 aa).

The active site involves histidine 47.

Belongs to the thioester dehydratase family. FabZ subfamily.

The protein localises to the cytoplasm. It carries out the reaction a (3R)-hydroxyacyl-[ACP] = a (2E)-enoyl-[ACP] + H2O. Functionally, involved in unsaturated fatty acids biosynthesis. Catalyzes the dehydration of short chain beta-hydroxyacyl-ACPs and long chain saturated and unsaturated beta-hydroxyacyl-ACPs. This Streptococcus uberis (strain ATCC BAA-854 / 0140J) protein is 3-hydroxyacyl-[acyl-carrier-protein] dehydratase FabZ.